The following is a 210-amino-acid chain: Glutathione S-transferase 4 (210 aa).

Residues 1-80 (MDFYYLPLSA…YLVEKYGKQD (80 aa)) enclose the GST N-terminal domain. Glutathione contacts are provided by residues Ser9, 50-52 (HTI), and 64-66 (ESR). Residues 87–208 (CPKKRALINQ…AGALEMKTLI (122 aa)) form the GST C-terminal domain.

Belongs to the GST superfamily. Theta family. In terms of assembly, homodimer.

It carries out the reaction RX + glutathione = an S-substituted glutathione + a halide anion + H(+). In terms of biological role, conjugation of reduced glutathione to a wide number of exogenous and endogenous hydrophobic electrophiles. This Musca domestica (House fly) protein is Glutathione S-transferase 4 (Gst4).